The following is a 508-amino-acid chain: Glycogen synthase (508 aa).

Lys-15 is an ADP-alpha-D-glucose binding site. The tract at residues 483-508 (ARNRAETRPQTASALSYREPRPAAEY) is disordered.

It belongs to the glycosyltransferase 1 family. Bacterial/plant glycogen synthase subfamily.

It carries out the reaction [(1-&gt;4)-alpha-D-glucosyl](n) + ADP-alpha-D-glucose = [(1-&gt;4)-alpha-D-glucosyl](n+1) + ADP + H(+). It functions in the pathway glycan biosynthesis; glycogen biosynthesis. Its function is as follows. Synthesizes alpha-1,4-glucan chains using ADP-glucose. This chain is Glycogen synthase, found in Paracidovorax citrulli (strain AAC00-1) (Acidovorax citrulli).